A 653-amino-acid chain; its full sequence is Large subunit GTPase 1 homolog (653 aa).

Residues 1–31 (MGRRRAPAGGSLGRALMRHQTQRSRSHRHTD) form a disordered region. The span at 16 to 28 (LMRHQTQRSRSHR) shows a compositional bias: basic residues. Residues serine 93 and serine 97 each carry the phosphoserine modification. The 282-residue stretch at 164 to 445 (WRQLWRVIER…LCDCPGLVMP (282 aa)) folds into the CP-type G domain. 212-215 (NKAD) provides a ligand contact to GTP. A disordered region spans residues 251 to 358 (DSEEEANKDD…RKTPQKRQLH (108 aa)). The residue at position 252 (serine 252) is a Phosphoserine. The segment covering 258-288 (KDDRQSNTAEFEHSSFDEAEISHSETEHLPA) has biased composition (basic and acidic residues). Acidic residues predominate over residues 299–333 (TTDEDDSEYEDCPEEEEDDWQTCSEEDGPEEEDCG). GTP is bound by residues 394–401 (GYPNVGKS) and 438–441 (DCPG). The segment at 630–653 (SENGAGKPWKKHGNRNKKEKSCRL) is disordered. Basic residues predominate over residues 637 to 647 (PWKKHGNRNKK).

It belongs to the TRAFAC class YlqF/YawG GTPase family. LSG1 subfamily.

It is found in the cytoplasm. The protein localises to the endoplasmic reticulum. It localises to the nucleus. Its subcellular location is the cajal body. It carries out the reaction GTP + H2O = GDP + phosphate + H(+). Functionally, functions as a GTPase. May act by mediating the release of NMD3 from the 60S ribosomal subunit after export into the cytoplasm during the 60S ribosomal subunit maturation. The chain is Large subunit GTPase 1 homolog from Macaca fascicularis (Crab-eating macaque).